The sequence spans 980 residues: Putative helicase 087L (980 aa).

The region spanning 59 to 246 (INPHTLYDGV…IDLFNLILRT (188 aa)) is the Helicase ATP-binding domain. Residue 72–79 (HEMGTGKT) participates in ATP binding. The DEAH box signature appears at 189 to 192 (DEAH). Residues 389–546 (RLSFVFSEFV…SIDLHMYEIA (158 aa)) enclose the Helicase C-terminal domain.

Belongs to the IIV-6 022L family. SNF2/RAD54 helicase subfamily.

The sequence is that of Putative helicase 087L from Invertebrate iridescent virus 3 (IIV-3).